The primary structure comprises 458 residues: Acyl-CoA-binding domain-containing protein 5 (458 aa).

Residues 8-97 enclose the ACB domain; that stretch reads HQTRFEAAVS…MKKILETMPV (90 aa). An acyl-CoA-binding positions include 19-28, 39-43, Lys-65, and Tyr-84; these read IQSLPKNGSF and YSFYK. Disordered stretches follow at residues 119–248 and 296–369; these read KHGR…REED and TETS…GPNG. Residues 125 to 139 are compositionally biased toward polar residues; that stretch reads GVTSELGSVLTSTPN. The stretch at 154–188 forms a coiled coil; it reads AESDEEQAATKEVREEDEEEESEHSEQEDKDVEQQ. Composition is skewed to basic and acidic residues over residues 177-195, 303-313, and 322-338; these read HSEQ…EKPA, ELKDGGEDGKQ, and TWSE…ERPS. Residues 343-356 show a composition bias toward gly residues; the sequence is GGDGSRSGQIGSGG. Positions 373 to 402 form a coiled coil; the sequence is EQIAVVLMRLQEDMQNVLQRLHSLEVQTAS. Residues 430–450 form a helical membrane-spanning segment; it reads GTLALAVVWPFVVHWLMHVFL.

Belongs to the ATG37 family.

Its subcellular location is the peroxisome membrane. In terms of biological role, acyl-CoA binding protein which acts as the peroxisome receptor for pexophagy but is dispensable for aggrephagy and nonselective autophagy. Binds medium- and long-chain acyl-CoA esters. The polypeptide is Acyl-CoA-binding domain-containing protein 5 (acbd5) (Xenopus tropicalis (Western clawed frog)).